The primary structure comprises 167 residues: MTKRIRTALCVIVSVLFLASCSSRPDGMHVILFSDMQAGVQEKIKKAAEQNAGKVDIFPAFQEKLLTEITAHEGDVFIVPEDMFQAYDDPENFQPLNGLPPEKTSPYTTVNKKTGEKTIYAVQIEKGKKQLNGYSFQLNRDMAAFIPVYAEKTEEALQLISQLTEAR.

Residues 1 to 20 (MTKRIRTALCVIVSVLFLAS) form the signal peptide. C21 carries N-palmitoyl cysteine lipidation. The S-diacylglycerol cysteine moiety is linked to residue C21.

The protein resides in the cell membrane. Functionally, may play a role in the degradation of type I rhamnogalacturonan derived from plant cell walls. This Bacillus subtilis (strain 168) protein is Putative lipoprotein YteS (yteS).